We begin with the raw amino-acid sequence, 377 residues long: Lipoyl synthase, mitochondrial (377 aa).

[4Fe-4S] cluster is bound by residues Cys-98, Cys-103, Cys-109, Cys-128, Cys-132, Cys-135, and Ser-343. One can recognise a Radical SAM core domain in the interval 113 to 332 (KKSEATATIM…RDTALDMGFL (220 aa)).

It belongs to the radical SAM superfamily. Lipoyl synthase family. [4Fe-4S] cluster serves as cofactor.

It localises to the mitochondrion. The enzyme catalyses [[Fe-S] cluster scaffold protein carrying a second [4Fe-4S](2+) cluster] + N(6)-octanoyl-L-lysyl-[protein] + 2 oxidized [2Fe-2S]-[ferredoxin] + 2 S-adenosyl-L-methionine + 4 H(+) = [[Fe-S] cluster scaffold protein] + N(6)-[(R)-dihydrolipoyl]-L-lysyl-[protein] + 4 Fe(3+) + 2 hydrogen sulfide + 2 5'-deoxyadenosine + 2 L-methionine + 2 reduced [2Fe-2S]-[ferredoxin]. The protein operates within protein modification; protein lipoylation via endogenous pathway; protein N(6)-(lipoyl)lysine from octanoyl-[acyl-carrier-protein]: step 2/2. In terms of biological role, catalyzes the radical-mediated insertion of two sulfur atoms into the C-6 and C-8 positions of the octanoyl moiety bound to the lipoyl domains of lipoate-dependent enzymes, thereby converting the octanoylated domains into lipoylated derivatives. This is Lipoyl synthase, mitochondrial from Candida tropicalis (strain ATCC MYA-3404 / T1) (Yeast).